A 213-amino-acid polypeptide reads, in one-letter code: Membrane-spanning 4-domains subfamily A member 3 (213 aa).

At 1-26 (MKPEETGGSVYQPLDESRHVQRGVLQ) the chain is on the cytoplasmic side. A helical membrane pass occupies residues 27 to 47 (ALGAIQILNGILILALGIFLV). Residues 48–58 (CLQHVSHHFRH) are Extracellular-facing. The helical transmembrane segment at 59-79 (FFFFTFYTGYPLWGAVFFISS) threads the bilayer. Over 80–97 (GSLTVAAGRNPTRMLMQN) the chain is Cytoplasmic. A helical membrane pass occupies residues 98–118 (SFGINIASTTIAFVGTVFLSV). Residues 119-148 (HLAFNTQAFKGCQSSPSPDVCISLGSSSDG) lie on the Extracellular side of the membrane. A helical transmembrane segment spans residues 149 to 169 (LVSLMLILTLLELSVTISISA). Over 170–213 (MWCLGNVCGLREAITSPPNSVESGILPEGSDSENLNTQPQASEE) the chain is Cytoplasmic. The segment at 189 to 213 (SVESGILPEGSDSENLNTQPQASEE) is disordered. The segment covering 201-213 (SENLNTQPQASEE) has biased composition (polar residues).

It belongs to the MS4A family. Interacts with CDKN3. Interacts with CDKN3-CDK2 complexes through its binding to CDKN3; this interaction facilitates dissociation of cyclin A from CDKN3-CDK2 complexes. Expressed at low levels only in specific immune tissues, such as, spleen, bone marrow and peripheral blood leukocytes.

The protein resides in the membrane. Its function is as follows. Hematopoietic modulator for the G1-S cell cycle transition. Modulates the level of phosphorylation of cyclin-dependent kinase 2 (CDK2) through its direct binding to cyclin-dependent kinase inhibitor 3 (CDKN3/KAP). The polypeptide is Membrane-spanning 4-domains subfamily A member 3 (Ms4a3) (Mus musculus (Mouse)).